A 212-amino-acid polypeptide reads, in one-letter code: Ropporin-1 (212 aa).

The region spanning 12-49 (PELPKMLKEFAKAAIRAQPQDLIQWGADYFEALSRGET) is the RIIa domain. The residue at position 56 (Ser56) is a Phosphoserine. Positions 209 to 212 (VWLE) are interaction with RHPN1.

It belongs to the ropporin family. In terms of assembly, homodimer. Interacts with AKAP3. May interact with SPA17. Interacts with RHPN1. Interacts with FSCB; the interaction increases upon spermatozoa capacitation conditions. Interacts with CFAP61. In terms of processing, sumoylated, sumoylation decreases upon spermatozoa capacitation conditions.

Its subcellular location is the cell projection. It is found in the cilium. It localises to the flagellum. Its function is as follows. Important for male fertility. With ROPN1L, involved in fibrous sheath integrity and sperm motility, plays a role in PKA-dependent signaling processes required for spermatozoa capacitation. The sequence is that of Ropporin-1 (ROPN1) from Macaca fascicularis (Crab-eating macaque).